The chain runs to 370 residues: Gibberellin 3-beta-dioxygenase 2-1 (370 aa).

The Fe2OG dioxygenase domain maps to 205-306; the sequence is MTATMHLNWY…RISLGYFLGP (102 aa). H229, D231, and H287 together coordinate Fe cation. R297 is a catalytic residue.

Belongs to the iron/ascorbate-dependent oxidoreductase family. GA3OX subfamily. L-ascorbate serves as cofactor. Requires Fe cation as cofactor. Expressed in internodes, nodes and the ear of the elongating stem.

It carries out the reaction gibberellin A20 + 2-oxoglutarate + O2 = gibberellin A1 + succinate + CO2. Converts the inactive gibberellin precursors GA9 and GA20 in the bioactives gibberellins GA4 and GA1. Also accepts GA15, GA44, the 2,3-unsaturated GA5 and 2,3-dihydroGA9 as substrate. No activity with GA12, GA53, GA24, GA19 and GA25. Also possesses 2-beta-hydroxylase, 2,3-desaturase, 2,3-epoxidase and 13-hydroxylase activities. This is Gibberellin 3-beta-dioxygenase 2-1 (GA3ox2-1) from Triticum aestivum (Wheat).